The sequence spans 131 residues: Heat shock protein 15 homolog (131 aa).

The 62-residue stretch at 6-67 folds into the S4 RNA-binding domain; the sequence is VRLDKWLWAA…NEEKEIKIIA (62 aa). Positions 98–131 are disordered; that stretch reads ARKNNSLSMPHPDRRPNKKERRDLLKFKHQDKFE. Residues 108 to 131 are compositionally biased toward basic and acidic residues; that stretch reads HPDRRPNKKERRDLLKFKHQDKFE.

Belongs to the HSP15 family.

Functionally, involved in the recycling of free 50S ribosomal subunits that still carry a nascent chain. Binds RNA more specifically than DNA. Binds with very high affinity to the free 50S ribosomal subunit. Does not bind it when it is part of the 70S ribosome. In Haemophilus influenzae (strain ATCC 51907 / DSM 11121 / KW20 / Rd), this protein is Heat shock protein 15 homolog (hslR).